Consider the following 249-residue polypeptide: Proteasome subunit alpha type-4 (249 aa).

This sequence belongs to the peptidase T1A family. As to quaternary structure, the 26S proteasome consists of a 20S proteasome core and two 19S regulatory subunits. The 20S proteasome core is composed of 28 subunits that are arranged in four stacked rings, resulting in a barrel-shaped structure. The two end rings are each formed by seven alpha subunits, and the two central rings are each formed by seven beta subunits. The catalytic chamber with the active sites is on the inside of the barrel.

The protein localises to the cytoplasm. Its subcellular location is the nucleus. Its function is as follows. The proteasome is a multicatalytic proteinase complex which is characterized by its ability to cleave peptides with Arg, Phe, Tyr, Leu, and Glu adjacent to the leaving group at neutral or slightly basic pH. The proteasome has an ATP-dependent proteolytic activity. This Petunia hybrida (Petunia) protein is Proteasome subunit alpha type-4 (PAC1).